The chain runs to 331 residues: DNA double-strand break repair nuclease NurA (331 aa).

2 residues coordinate Mn(2+): D56 and D131.

This sequence belongs to the NurA family. In terms of assembly, homodimer. Interacts with SSB. Requires Mn(2+) as cofactor.

The 5'-3' ssDNA and dsDNA exonuclease and ssDNA endonuclease activities are inhibited by SSB (single-stranded DNA-binding protein). Involved in DNA double-strand break (DSB) repair. Probably acts with HerA to stimulate resection of the 5' strand and produce the long 3' single-strand that is required for RadA loading. Exhibits both single-stranded endonuclease activity and 5'-3' exonuclease activity on single-stranded and double-stranded DNA. The polypeptide is DNA double-strand break repair nuclease NurA (Sulfurisphaera tokodaii (strain DSM 16993 / JCM 10545 / NBRC 100140 / 7) (Sulfolobus tokodaii)).